Here is a 290-residue protein sequence, read N- to C-terminus: MLNKAEQISEKSESAYVERFVNAGGVETRYLEAGKGQPVILIHGGGAGAESEGNWRNVIPILARHYRVIAMDMLGFGKTAKPDIEYTQDRRIRHLHDFIKAMNFDGKVSIVGNSMGGATGLGVSVLHSELVNALVLMGSAGLVVEIHEDLRPIINYDFTREGMVHLVKALTNDGFKIDDAMINSRYTYATDEATRKAYVATMQWIREQGGLFYDPEFIRKVPVPTLVVHGKDDKVVPVETAYKFLDLIDDSWGYIIPHCGHWAMIEHPEDFANATLSFLSRRADITRAAA.

Catalysis depends on residues S114, D233, and H261.

Belongs to the DmpD/TodF/XylF esterase family. In terms of assembly, homodimer.

The enzyme catalyses (2E,4E)-6-(2-aminophenyl)-2-hydroxy-6-oxohexa-2,4-dienoate + H2O = (2E)-2-hydroxypenta-2,4-dienoate + anthranilate + H(+). Its pathway is xenobiotic degradation; carbazole degradation. Its function is as follows. Involved in the degradation of carbazole, a toxic N-heterocyclic aromatic compound containing dibenzopyrrole system. Catalyzes the hydrolytic cleavage of a carbon-carbon bond of 2-hydroxy-6-oxo-6-(2'-aminophenyl)hexa-2,4-dienoic acid (HOPDA) to yield anthranilate. CarC is specific for 2-hydroxy-6-oxo-6-phenylhexa-2,4-dienoic acid (6-phenyl-HODA), and has little activity toward 2-hydroxy-6-oxohepta-2,4-dienoic acid and 2-hydroxymuconic semialdehyde. The effect of the presence of an amino group or hydroxyl group at the 2'-position of phenyl moiety of 6-phenyl-HODA on the enzyme activity is found to be small. The chain is 2-hydroxy-6-oxo-6-(2'-aminophenyl)hexa-2,4-dienoic acid hydrolase (carC) from Metapseudomonas resinovorans (Pseudomonas resinovorans).